We begin with the raw amino-acid sequence, 237 residues long: Ribosomal RNA small subunit methyltransferase G (237 aa).

S-adenosyl-L-methionine contacts are provided by residues G78, F83, 129–130, and R148; that span reads AE.

The protein belongs to the methyltransferase superfamily. RNA methyltransferase RsmG family.

It localises to the cytoplasm. Specifically methylates the N7 position of a guanine in 16S rRNA. This Streptococcus equi subsp. equi (strain 4047) protein is Ribosomal RNA small subunit methyltransferase G.